The chain runs to 158 residues: NADH-quinone oxidoreductase subunit B (158 aa).

4 residues coordinate [4Fe-4S] cluster: cysteine 37, cysteine 38, cysteine 102, and cysteine 132.

The protein belongs to the complex I 20 kDa subunit family. In terms of assembly, NDH-1 is composed of 14 different subunits. Subunits NuoB, C, D, E, F, and G constitute the peripheral sector of the complex. [4Fe-4S] cluster is required as a cofactor.

It is found in the cell inner membrane. The catalysed reaction is a quinone + NADH + 5 H(+)(in) = a quinol + NAD(+) + 4 H(+)(out). NDH-1 shuttles electrons from NADH, via FMN and iron-sulfur (Fe-S) centers, to quinones in the respiratory chain. Couples the redox reaction to proton translocation (for every two electrons transferred, four hydrogen ions are translocated across the cytoplasmic membrane), and thus conserves the redox energy in a proton gradient. In Methylobacillus flagellatus (strain ATCC 51484 / DSM 6875 / VKM B-1610 / KT), this protein is NADH-quinone oxidoreductase subunit B.